A 59-amino-acid chain; its full sequence is Cecropin-C (59 aa).

Residues 1 to 23 (MNFKLIFLVALVLMAAFLGQTEG) form the signal peptide. Valine amide is present on Val58.

Belongs to the cecropin family.

It localises to the secreted. Functionally, cecropins have lytic and antibacterial activity against several Gram-positive and Gram-negative bacteria. The chain is Cecropin-C (CecC) from Anopheles gambiae (African malaria mosquito).